A 399-amino-acid polypeptide reads, in one-letter code: Transcription termination factor 1, mitochondrial (399 aa).

The N-terminal 57 residues, 1 to 57 (MQSLSLGQTSISKGLNYLTIMAPGNLWHMRNNFLFGSRCWMTRFSAENIFKSVSFRL), are a transit peptide targeting the mitochondrion. Interaction with DNA stretches follow at residues 169-170 (RS), 247-251 (QSTKR), 324-331 (AEKKFNDK), 355-358 (SIST), and 384-391 (SKKRYEAK).

Belongs to the mTERF family. In terms of assembly, monomer. In terms of processing, phosphoprotein with mostly four phosphate groups. While the DNA-binding activity is unaffected by the phosphorylation state, only the phosphorylated form of the protein is active for termination activity. Functioning seems to be regulated by phosphorylation.

It is found in the mitochondrion. In terms of biological role, transcription termination factor. Binds to a 28 bp region within the tRNA(Leu(uur)) gene at a position immediately adjacent to and downstream of the 16S rRNA gene; this region comprises a tridecamer sequence critical for directing accurate termination. Binds DNA along the major grove and promotes DNA bending and partial unwinding. Promotes base flipping. Transcription termination activity appears to be polarized with highest specificity for transcripts initiated on the light strand. This is Transcription termination factor 1, mitochondrial (MTERF1) from Homo sapiens (Human).